Here is a 934-residue protein sequence, read N- to C-terminus: 2-oxoglutarate dehydrogenase E1 component (934 aa).

Belongs to the alpha-ketoglutarate dehydrogenase family. In terms of assembly, homodimer. Part of the 2-oxoglutarate dehydrogenase (OGDH) complex composed of E1 (2-oxoglutarate dehydrogenase), E2 (dihydrolipoamide succinyltransferase) and E3 (dihydrolipoamide dehydrogenase); the complex contains multiple copies of the three enzymatic components (E1, E2 and E3). It depends on thiamine diphosphate as a cofactor.

The enzyme catalyses N(6)-[(R)-lipoyl]-L-lysyl-[protein] + 2-oxoglutarate + H(+) = N(6)-[(R)-S(8)-succinyldihydrolipoyl]-L-lysyl-[protein] + CO2. Functionally, E1 component of the 2-oxoglutarate dehydrogenase (OGDH) complex which catalyzes the decarboxylation of 2-oxoglutarate, the first step in the conversion of 2-oxoglutarate to succinyl-CoA and CO(2). This Coxiella burnetii (strain RSA 493 / Nine Mile phase I) protein is 2-oxoglutarate dehydrogenase E1 component (sucA).